Consider the following 396-residue polypeptide: DNA polymerase interacting tetratricopeptide repeat-containing, protein of 47 kDa (396 aa).

3 TPR repeats span residues 91 to 124 (ALNY…KTDN), 129 to 162 (AVLY…KPDY), and 163 to 196 (TKAR…DVDN).

The protein belongs to the TTC4 family. In terms of assembly, forms a complex with Hsp83 and Hsp70aa. Interacts with DNApol-alpha180; the interaction inhibits the activity of the DNA polymerase and occurs only in proliferating cells but not in quiescent cells. In terms of tissue distribution, more abundant in young embryos, pupae and females and a lower level expression seen in late embryos, larvae and males.

Its subcellular location is the nucleus. The protein localises to the nucleoplasm. The protein resides in the cytoplasm. Its function is as follows. May act as a co-chaperone for HSP83. The chain is DNA polymerase interacting tetratricopeptide repeat-containing, protein of 47 kDa (Dpit47) from Drosophila melanogaster (Fruit fly).